A 194-amino-acid polypeptide reads, in one-letter code: 3-isopropylmalate dehydratase small subunit (194 aa).

This sequence belongs to the LeuD family. LeuD type 1 subfamily. Heterodimer of LeuC and LeuD.

The catalysed reaction is (2R,3S)-3-isopropylmalate = (2S)-2-isopropylmalate. It participates in amino-acid biosynthesis; L-leucine biosynthesis; L-leucine from 3-methyl-2-oxobutanoate: step 2/4. Its function is as follows. Catalyzes the isomerization between 2-isopropylmalate and 3-isopropylmalate, via the formation of 2-isopropylmaleate. The polypeptide is 3-isopropylmalate dehydratase small subunit (Brevibacillus brevis (strain 47 / JCM 6285 / NBRC 100599)).